Here is a 34-residue protein sequence, read N- to C-terminus: Photosystem II reaction center protein M (34 aa).

A helical membrane pass occupies residues 5 to 25 (ILAFIATTLFVLVPTAFLLII).

Belongs to the PsbM family. PSII is composed of 1 copy each of membrane proteins PsbA, PsbB, PsbC, PsbD, PsbE, PsbF, PsbH, PsbI, PsbJ, PsbK, PsbL, PsbM, PsbT, PsbX, PsbY, PsbZ, Psb30/Ycf12, at least 3 peripheral proteins of the oxygen-evolving complex and a large number of cofactors. It forms dimeric complexes.

The protein localises to the plastid. It is found in the chloroplast thylakoid membrane. Its function is as follows. One of the components of the core complex of photosystem II (PSII). PSII is a light-driven water:plastoquinone oxidoreductase that uses light energy to abstract electrons from H(2)O, generating O(2) and a proton gradient subsequently used for ATP formation. It consists of a core antenna complex that captures photons, and an electron transfer chain that converts photonic excitation into a charge separation. This subunit is found at the monomer-monomer interface. The sequence is that of Photosystem II reaction center protein M from Citrus sinensis (Sweet orange).